Here is a 374-residue protein sequence, read N- to C-terminus: ATPase ASNA1 homolog (374 aa).

Residue 44-51 (KGGVGKTT) coordinates ATP. Asp73 is an active-site residue. 2 residues coordinate ATP: Glu244 and Asn271.

The protein belongs to the arsA ATPase family. As to quaternary structure, homodimer.

Its subcellular location is the cytoplasm. The protein localises to the endoplasmic reticulum. Its function is as follows. ATPase required for the post-translational delivery of tail-anchored (TA) proteins to the endoplasmic reticulum. Recognizes and selectively binds the transmembrane domain of TA proteins in the cytosol. This complex then targets to the endoplasmic reticulum by membrane-bound receptors, where the tail-anchored protein is released for insertion. This process is regulated by ATP binding and hydrolysis. ATP binding drives the homodimer towards the closed dimer state, facilitating recognition of newly synthesized TA membrane proteins. ATP hydrolysis is required for insertion. Subsequently, the homodimer reverts towards the open dimer state, lowering its affinity for the membrane-bound receptor, and returning it to the cytosol to initiate a new round of targeting. The chain is ATPase ASNA1 homolog from Plasmodium vivax (strain Salvador I).